The primary structure comprises 191 residues: Cell division protein SepF (191 aa).

Residues Glu21–Thr96 form a disordered region. The segment covering Pro25–Ser56 has biased composition (low complexity). Polar residues-rich tracts occupy residues Arg57–Arg69 and His86–Thr95.

Belongs to the SepF family. Homodimer. Interacts with FtsZ.

The protein localises to the cytoplasm. In terms of biological role, cell division protein that is part of the divisome complex and is recruited early to the Z-ring. Probably stimulates Z-ring formation, perhaps through the cross-linking of FtsZ protofilaments. Its function overlaps with FtsA. This Streptococcus mutans serotype c (strain ATCC 700610 / UA159) protein is Cell division protein SepF.